The sequence spans 183 residues: Ribosome-recycling factor (183 aa).

Positions 134-156 (DANDELKKHQSEMSQDEVKGHQD) are disordered.

It belongs to the RRF family.

It is found in the cytoplasm. Functionally, responsible for the release of ribosomes from messenger RNA at the termination of protein biosynthesis. May increase the efficiency of translation by recycling ribosomes from one round of translation to another. This chain is Ribosome-recycling factor, found in Leptospira biflexa serovar Patoc (strain Patoc 1 / Ames).